Consider the following 218-residue polypeptide: Octanoyltransferase (218 aa).

In terms of domain architecture, BPL/LPL catalytic spans 31-207; the sequence is AQTPDELWLL…QLAAQLGYAE (177 aa). Substrate contacts are provided by residues 70–77, 137–139, and 150–152; these read RGGQVTYH, SLG, and GLA. C168 serves as the catalytic Acyl-thioester intermediate.

Belongs to the LipB family.

The protein resides in the cytoplasm. The catalysed reaction is octanoyl-[ACP] + L-lysyl-[protein] = N(6)-octanoyl-L-lysyl-[protein] + holo-[ACP] + H(+). Its pathway is protein modification; protein lipoylation via endogenous pathway; protein N(6)-(lipoyl)lysine from octanoyl-[acyl-carrier-protein]: step 1/2. In terms of biological role, catalyzes the transfer of endogenously produced octanoic acid from octanoyl-acyl-carrier-protein onto the lipoyl domains of lipoate-dependent enzymes. Lipoyl-ACP can also act as a substrate although octanoyl-ACP is likely to be the physiological substrate. In Azotobacter vinelandii (strain DJ / ATCC BAA-1303), this protein is Octanoyltransferase.